A 348-amino-acid chain; its full sequence is MASGEDGPRSCMVCGDRATGYHFHALTCEGCKGFFRRTVSKNTGLTCPFAGNCKVNKAQRRHCPACRLQKCLDAGMKKEMILSAEALVQRRAKQAQRRAQWAPVQLSKGQQELVQTLLGAHARHVGTMFDQFVQFRPPAHLFIHHQRLPIPVPALPLLKHFAEVNTFMVQEVIKFTKDLPLFRSLPMEDQISLLKGAAVEICHIALNTTFCLQTRNFLCGPLCYALEDGVHVGFQEEFLELLFRFHATLRRLQLQEPEYVLMAAMALFSPDRPGVTRREEIDRLQEVTALTLQSYIKGQPPRPRDRFLYAKLLGLLAELRSIDNAYGYQIQHIQGLSAMMPLLQEICS.

Residues 8-83 (PRSCMVCGDR…AGMKKEMILS (76 aa)) constitute a DNA-binding region (nuclear receptor). The segment at 11–31 (CMVCGDRATGYHFHALTCEGC) adopts an NR C4-type zinc-finger fold. The residue at position 38 (Thr38) is a Phosphothreonine; by PKC. The segment at 47–71 (CPFAGNCKVNKAQRRHCPACRLQKC) adopts an NR C4-type zinc-finger fold. An NR LBD domain is found at 109–348 (GQQELVQTLL…MMPLLQEICS (240 aa)).

The protein belongs to the nuclear hormone receptor family. NR1 subfamily. In terms of assembly, heterodimer of NR1I3 and RXR. Interacts with PSMC4. Interacts with ECT2. Directly interacts with DNAJC7; this complex may also include HSP90. Interacts with CRY1. Interacts with CRY2 in a ligand-dependent manner. Post-translationally, phosphorylated at Thr-38 by PKC, dephosphorylation of Thr-38 is required for nuclear translocation and activation.

It localises to the nucleus. The protein localises to the cytoplasm. It is found in the cytoskeleton. Functionally, binds and transactivates the retinoic acid response elements that control expression of the retinoic acid receptor beta 2 and alcohol dehydrogenase 3 genes. Transactivates both the phenobarbital responsive element module of the human CYP2B6 gene and the CYP3A4 xenobiotic response element. In Callorhinus ursinus (Northern fur seal), this protein is Nuclear receptor subfamily 1 group I member 3 (NR1I3).